Reading from the N-terminus, the 201-residue chain is 3-isopropylmalate dehydratase small subunit (201 aa).

It belongs to the LeuD family. LeuD type 1 subfamily. In terms of assembly, heterodimer of LeuC and LeuD.

It catalyses the reaction (2R,3S)-3-isopropylmalate = (2S)-2-isopropylmalate. It functions in the pathway amino-acid biosynthesis; L-leucine biosynthesis; L-leucine from 3-methyl-2-oxobutanoate: step 2/4. Catalyzes the isomerization between 2-isopropylmalate and 3-isopropylmalate, via the formation of 2-isopropylmaleate. This chain is 3-isopropylmalate dehydratase small subunit, found in Agrobacterium fabrum (strain C58 / ATCC 33970) (Agrobacterium tumefaciens (strain C58)).